Reading from the N-terminus, the 419-residue chain is E3 ubiquitin-protein ligase RNFT1 (419 aa).

The interval methionine 1–glutamate 120 is disordered. Composition is skewed to polar residues over residues glutamate 31–leucine 44 and glycine 72–glycine 82. Over residues threonine 84–glycine 102 the composition is skewed to basic residues. Transmembrane regions (helical) follow at residues phenylalanine 141–valine 161, leucine 187–phenylalanine 207, phenylalanine 217–valine 237, phenylalanine 240–leucine 260, tyrosine 270–phenylalanine 290, and valine 303–leucine 323. The interval isoleucine 352–lysine 403 is required for ubiquitin ligase activity and for protection against ER stress-induced cell death. The RING-type zinc-finger motif lies at cysteine 359–arginine 397.

Its subcellular location is the endoplasmic reticulum membrane. The enzyme catalyses S-ubiquitinyl-[E2 ubiquitin-conjugating enzyme]-L-cysteine + [acceptor protein]-L-lysine = [E2 ubiquitin-conjugating enzyme]-L-cysteine + N(6)-ubiquitinyl-[acceptor protein]-L-lysine.. Its pathway is protein modification; protein ubiquitination. Its function is as follows. E3 ubiquitin-protein ligase that acts in the endoplasmic reticulum (ER)-associated degradation (ERAD) pathway, which targets misfolded proteins that accumulate in the endoplasmic reticulum (ER) for ubiquitination and subsequent proteasome-mediated degradation. Protects cells from ER stress-induced apoptosis. The polypeptide is E3 ubiquitin-protein ligase RNFT1 (rnft1) (Danio rerio (Zebrafish)).